A 640-amino-acid polypeptide reads, in one-letter code: MLISTLPLLLHEQLAQSTRMRVLCVAEKNSIAKEVAKILSGGRARPRNSLYKYVKNYDFQYTFQGLGPCDVTMTAVAGHVLTTDFGPEYAWGKCPPGRLFDAPFLTKPPPDRDQRAGILKNIIREARNADRLMIWTDCDREGEYIGWEIMSVAQGANPRLNLQTTWRAQFSHLEPQHIVAAANNPKALDMKLVAAVECRTEFDLRVGTLFTRFLTNIYKSKRLVGEKEVVSYGTCQFPTLSFVVDRYVRVRNFRPEPFWSIDLAVTKNGQKVNFSWSRNHLFDRMFVYVIYAQLLEGPQKPRIVGVSTKPTSHYKPLPLTTVDLQKCCSRYFKMLAKAALDAAELLYTAGYISYPRTETDQFPAKLDLKGYITKQTLSLDWGTHATRLLQGSFRPPRGGKHDDKAHPPIYPVKSASLDTLRPDQRKVYEFVVRRFLACCSDDARGLQTKVDLQWRSERFTALGLQVTERNFLDVYPYSDWKSLAQLPEFAEGEEVTPSSCKVKEGKTSPPNYMTEAELIALMDANGIGTDATIADHVEKIAQRNYVTRRKIGKSEVFIPTSLGISLIDAFDAILIDRISLLKPFLRRAMEGFLQKISRGEITKQDVISQLLPLYKEAFMESNQKGHVISDTFIQTSRGLS.

A Toprim domain is found at 21–175; that stretch reads RVLCVAEKNS…WRAQFSHLEP (155 aa). 3 residues coordinate Mg(2+): E27, D137, and D139. The region spanning 189 to 618 is the Topo IA-type catalytic domain; the sequence is DMKLVAAVEC…QLLPLYKEAF (430 aa). The active-site O-(5'-phospho-DNA)-tyrosine intermediate is Y354.

It belongs to the type IA topoisomerase family. It depends on Mg(2+) as a cofactor.

It carries out the reaction ATP-independent breakage of single-stranded DNA, followed by passage and rejoining.. Its function is as follows. Introduces a single-strand break via transesterification at a target site in duplex DNA. Releases the supercoiling and torsional tension of DNA introduced during the DNA replication and transcription by transiently cleaving and rejoining one strand of the DNA duplex. The scissile phosphodiester is attacked by the catalytic tyrosine of the enzyme, resulting in the formation of a DNA-(5'-phosphotyrosyl)-enzyme intermediate and the expulsion of a 3'-OH DNA strand. The protein is DNA topoisomerase 3 (TOP3) of Candidozyma auris (Yeast).